We begin with the raw amino-acid sequence, 211 residues long: tRNA (guanine-N(7)-)-methyltransferase (211 aa).

Residues aspartate 40, glutamate 65, asparagine 92, and aspartate 117 each contribute to the S-adenosyl-L-methionine site. The active site involves aspartate 117. Lysine 121 is a substrate binding site. The interval 123 to 128 (RHNKRR) is interaction with RNA. Aspartate 153 is a substrate binding site.

Belongs to the class I-like SAM-binding methyltransferase superfamily. TrmB family.

It catalyses the reaction guanosine(46) in tRNA + S-adenosyl-L-methionine = N(7)-methylguanosine(46) in tRNA + S-adenosyl-L-homocysteine. It participates in tRNA modification; N(7)-methylguanine-tRNA biosynthesis. Functionally, catalyzes the formation of N(7)-methylguanine at position 46 (m7G46) in tRNA. The protein is tRNA (guanine-N(7)-)-methyltransferase of Synechocystis sp. (strain ATCC 27184 / PCC 6803 / Kazusa).